The following is a 472-amino-acid chain: Glycogen synthase (472 aa).

Lys-16 provides a ligand contact to ADP-alpha-D-glucose.

Belongs to the glycosyltransferase 1 family. Bacterial/plant glycogen synthase subfamily.

The catalysed reaction is [(1-&gt;4)-alpha-D-glucosyl](n) + ADP-alpha-D-glucose = [(1-&gt;4)-alpha-D-glucosyl](n+1) + ADP + H(+). It participates in glycan biosynthesis; glycogen biosynthesis. Synthesizes alpha-1,4-glucan chains using ADP-glucose. This chain is Glycogen synthase, found in Jannaschia sp. (strain CCS1).